The following is a 255-amino-acid chain: Triosephosphate isomerase (255 aa).

Residue 9–11 (NWK) coordinates substrate. The active-site Electrophile is the H95. The active-site Proton acceptor is E167. Residues G173, S212, and 233-234 (GG) contribute to the substrate site.

It belongs to the triosephosphate isomerase family. Homodimer.

It localises to the cytoplasm. It catalyses the reaction D-glyceraldehyde 3-phosphate = dihydroxyacetone phosphate. Its pathway is carbohydrate biosynthesis; gluconeogenesis. The protein operates within carbohydrate degradation; glycolysis; D-glyceraldehyde 3-phosphate from glycerone phosphate: step 1/1. Its function is as follows. Involved in the gluconeogenesis. Catalyzes stereospecifically the conversion of dihydroxyacetone phosphate (DHAP) to D-glyceraldehyde-3-phosphate (G3P). This Pectobacterium atrosepticum (strain SCRI 1043 / ATCC BAA-672) (Erwinia carotovora subsp. atroseptica) protein is Triosephosphate isomerase.